The primary structure comprises 181 residues: MTDVDIKIENIVASATLGKSIDLQTVAEALENVDFNREQFPGLVYKLKEPKTAALIFGSGKLVCTGAKSIEDSKRAIKLTVDMMRTMDPDIPEEFEIKIQNIVASANLGKPLNLEAVALGLENTEYEPEQFPGLVYRLDDPKVVLLLFGSGKVVCTGAKSAEDAKLGVEKTKARLAELDLI.

2 repeat units span residues Ile-8–Met-84 and Ile-99–Leu-175.

The protein belongs to the TBP family.

In terms of biological role, general factor that plays a role in the activation of archaeal genes transcribed by RNA polymerase. Binds specifically to the TATA box promoter element which lies close to the position of transcription initiation. The polypeptide is TATA-box-binding protein (tbp) (Methanothermobacter thermautotrophicus (strain ATCC 29096 / DSM 1053 / JCM 10044 / NBRC 100330 / Delta H) (Methanobacterium thermoautotrophicum)).